The following is a 331-amino-acid chain: Decarboxylase orsB (331 aa).

Residues H11, H157, and D284 each coordinate Zn(2+).

It belongs to the metallo-dependent hydrolases superfamily. ACMSD family.

It functions in the pathway secondary metabolite biosynthesis. In terms of biological role, decarboxylase; part of the gene cluster that mediates the biosynthesis of orsellinic acid, as well as of the cathepsin K inhibitors F9775 A and F9775 B. The non-reducing polyketide synthase orsA produces orsellinic acid by condensing acetyl-CoA with 3 malonyl-CoA units. Further modifications by the decarboxylase orsB and the tyrosinase-like protein orsC lead to the production of F9775 A and F9775 B. The functions of orsD and orsE remain unclear since only orsB and orsC are required to convert orsellinic acid into F9775 A and F9775 B. In Emericella nidulans (strain FGSC A4 / ATCC 38163 / CBS 112.46 / NRRL 194 / M139) (Aspergillus nidulans), this protein is Decarboxylase orsB.